The following is a 955-amino-acid chain: Outer capsid protein VP2 (955 aa).

This sequence belongs to the orbivirus VP2 family.

The protein localises to the virion. The VP2 protein is one of the two proteins (with VP5) which constitute the virus particle outer capsid. It is the major target of the host immunogenic response. Responsible for viral attachment to target host cell, probably by binding to sialic acid. This attachment induces virion internalization predominantly through clathrin-dependent endocytosis. The sequence is that of Outer capsid protein VP2 (Segment-2) from Antilocapra americana (Pronghorn).